A 150-amino-acid polypeptide reads, in one-letter code: UPF0178 protein Sbal_1771 (150 aa).

Belongs to the UPF0178 family.

In Shewanella baltica (strain OS155 / ATCC BAA-1091), this protein is UPF0178 protein Sbal_1771.